A 457-amino-acid chain; its full sequence is Acetylcholine receptor subunit alpha (457 aa).

Residues 1–20 (MEPRPLLLLLGLCSAGLVLG) form the signal peptide. Residues 21 to 230 (SEHETRLVAK…ITYHFVMQRL (210 aa)) lie on the Extracellular side of the membrane. Intrachain disulfides connect cysteine 148-cysteine 162 and cysteine 212-cysteine 213. Asparagine 161 is a glycosylation site (N-linked (GlcNAc...) asparagine). 3 helical membrane-spanning segments follow: residues 231-255 (PLYF…VFYL), 263-281 (MTLS…LVIV), and 297-316 (YMLF…VIVI). The Cytoplasmic segment spans residues 317-428 (NTHHRSPSTH…WKYVAMVMDH (112 aa)). The chain crosses the membrane as a helical span at residues 429 to 447 (ILLAVFMLVCIIGTLAVFA).

It belongs to the ligand-gated ion channel (TC 1.A.9) family. Acetylcholine receptor (TC 1.A.9.1) subfamily. Alpha-1/CHRNA1 sub-subfamily. In terms of assembly, one of the alpha chains that assemble within the acetylcholine receptor, a pentamer of two alpha chains, a beta, a delta, and a gamma (in immature muscle) or epsilon (in mature muscle) chains. The muscle heteropentamer composed of alpha-1, beta-1, delta, epsilon subunits interacts with the alpha-conotoxin ImII.

The protein resides in the postsynaptic cell membrane. Its subcellular location is the cell membrane. It carries out the reaction K(+)(in) = K(+)(out). It catalyses the reaction Na(+)(in) = Na(+)(out). Functionally, upon acetylcholine binding, the AChR responds by an extensive change in conformation that affects all subunits and leads to opening of an ion-conducting channel across the plasma membrane. The sequence is that of Acetylcholine receptor subunit alpha (CHRNA1) from Bos taurus (Bovine).